A 331-amino-acid chain; its full sequence is Holliday junction branch migration complex subunit RuvB (331 aa).

A large ATPase domain (RuvB-L) region spans residues 1–171 (MTEPLDAALR…FGIIEHLEYY (171 aa)). ATP is bound by residues Leu9, Arg10, Gly51, Lys54, Thr55, Thr56, 118-120 (EDF), Arg161, Tyr171, and Arg208. Residue Thr55 coordinates Mg(2+). Residues 172–242 (TPEEIGTNLL…RAQDALDKLG (71 aa)) are small ATPAse domain (RuvB-S). The head domain (RuvB-H) stretch occupies residues 245 to 331 (TAGLDERDKK…AESDLGLYTN (87 aa)). DNA contacts are provided by Arg300 and Arg305.

This sequence belongs to the RuvB family. As to quaternary structure, homohexamer. Forms an RuvA(8)-RuvB(12)-Holliday junction (HJ) complex. HJ DNA is sandwiched between 2 RuvA tetramers; dsDNA enters through RuvA and exits via RuvB. An RuvB hexamer assembles on each DNA strand where it exits the tetramer. Each RuvB hexamer is contacted by two RuvA subunits (via domain III) on 2 adjacent RuvB subunits; this complex drives branch migration. In the full resolvosome a probable DNA-RuvA(4)-RuvB(12)-RuvC(2) complex forms which resolves the HJ.

It localises to the cytoplasm. The enzyme catalyses ATP + H2O = ADP + phosphate + H(+). Functionally, the RuvA-RuvB-RuvC complex processes Holliday junction (HJ) DNA during genetic recombination and DNA repair, while the RuvA-RuvB complex plays an important role in the rescue of blocked DNA replication forks via replication fork reversal (RFR). RuvA specifically binds to HJ cruciform DNA, conferring on it an open structure. The RuvB hexamer acts as an ATP-dependent pump, pulling dsDNA into and through the RuvAB complex. RuvB forms 2 homohexamers on either side of HJ DNA bound by 1 or 2 RuvA tetramers; 4 subunits per hexamer contact DNA at a time. Coordinated motions by a converter formed by DNA-disengaged RuvB subunits stimulates ATP hydrolysis and nucleotide exchange. Immobilization of the converter enables RuvB to convert the ATP-contained energy into a lever motion, pulling 2 nucleotides of DNA out of the RuvA tetramer per ATP hydrolyzed, thus driving DNA branch migration. The RuvB motors rotate together with the DNA substrate, which together with the progressing nucleotide cycle form the mechanistic basis for DNA recombination by continuous HJ branch migration. Branch migration allows RuvC to scan DNA until it finds its consensus sequence, where it cleaves and resolves cruciform DNA. The chain is Holliday junction branch migration complex subunit RuvB from Deinococcus geothermalis (strain DSM 11300 / CIP 105573 / AG-3a).